The primary structure comprises 270 residues: 4-hydroxy-tetrahydrodipicolinate reductase (270 aa).

Residues 11–16 (GAGGRM) and glutamate 37 contribute to the NAD(+) site. An NADP(+)-binding site is contributed by arginine 38. NAD(+) is bound by residues 101 to 103 (GTT) and 125 to 128 (APNM). Catalysis depends on histidine 158, which acts as the Proton donor/acceptor. A (S)-2,3,4,5-tetrahydrodipicolinate-binding site is contributed by histidine 159. The active-site Proton donor is the lysine 162. 168–169 (GT) lines the (S)-2,3,4,5-tetrahydrodipicolinate pocket.

It belongs to the DapB family.

Its subcellular location is the cytoplasm. The enzyme catalyses (S)-2,3,4,5-tetrahydrodipicolinate + NAD(+) + H2O = (2S,4S)-4-hydroxy-2,3,4,5-tetrahydrodipicolinate + NADH + H(+). It catalyses the reaction (S)-2,3,4,5-tetrahydrodipicolinate + NADP(+) + H2O = (2S,4S)-4-hydroxy-2,3,4,5-tetrahydrodipicolinate + NADPH + H(+). It functions in the pathway amino-acid biosynthesis; L-lysine biosynthesis via DAP pathway; (S)-tetrahydrodipicolinate from L-aspartate: step 4/4. Its function is as follows. Catalyzes the conversion of 4-hydroxy-tetrahydrodipicolinate (HTPA) to tetrahydrodipicolinate. This Shewanella sp. (strain MR-4) protein is 4-hydroxy-tetrahydrodipicolinate reductase.